A 272-amino-acid polypeptide reads, in one-letter code: D-aminoacyl-tRNA deacylase (272 aa).

The protein belongs to the DtdA deacylase family. As to quaternary structure, monomer. It depends on Zn(2+) as a cofactor.

The enzyme catalyses a D-aminoacyl-tRNA + H2O = a tRNA + a D-alpha-amino acid + H(+). The catalysed reaction is glycyl-tRNA(Ala) + H2O = tRNA(Ala) + glycine + H(+). Functionally, D-aminoacyl-tRNA deacylase with broad substrate specificity. By recycling D-aminoacyl-tRNA to D-amino acids and free tRNA molecules, this enzyme counteracts the toxicity associated with the formation of D-aminoacyl-tRNA entities in vivo. The sequence is that of D-aminoacyl-tRNA deacylase from Thermococcus kodakarensis (strain ATCC BAA-918 / JCM 12380 / KOD1) (Pyrococcus kodakaraensis (strain KOD1)).